Consider the following 578-residue polypeptide: Alpha-(1,6)-fucosyltransferase (578 aa).

Topologically, residues 1–9 are cytoplasmic; the sequence is MRPWTGSWR. The helical; Signal-anchor for type II membrane protein transmembrane segment at 10-30 threads the bilayer; the sequence is WIMLILFAWGTLLFYIGGHLV. Residues 31-578 are Lumenal-facing; the sequence is RDNENPDHSS…KYPTYQEAEK (548 aa). 3 disulfides stabilise this stretch: cysteine 207/cysteine 269, cysteine 215/cysteine 233, and cysteine 221/cysteine 225. In terms of domain architecture, GT23 spans 209-496; sequence KAKKLVCNIN…PDASAHFHSL (288 aa). Residues 302–308 carry the SH3-binding motif; sequence PRPPYLP. Residues 368-369 form an important for donor substrate binding region; sequence RR. Cysteines 468 and 475 form a disulfide. The region spanning 505–566 is the SH3 domain; the sequence is QNAHNQLAIY…PSYKVKEKIE (62 aa).

It belongs to the glycosyltransferase 23 family.

The protein localises to the golgi apparatus. It localises to the golgi stack membrane. It catalyses the reaction N(4)-{beta-D-GlcNAc-(1-&gt;2)-alpha-D-Man-(1-&gt;3)-[beta-D-GlcNAc-(1-&gt;2)-alpha-D-Man-(1-&gt;6)]-beta-D-Man-(1-&gt;4)-beta-D-GlcNAc-(1-&gt;4)-beta-D-GlcNAc}-L-asparaginyl-[protein] + GDP-beta-L-fucose = an N(4)-{beta-D-GlcNAc-(1-&gt;2)-alpha-D-Man-(1-&gt;3)-[beta-D-GlcNAc-(1-&gt;2)-alpha-D-Man-(1-&gt;6)]-beta-D-Man-(1-&gt;4)-beta-D-GlcNAc-(1-&gt;4)-[alpha-L-Fuc-(1-&gt;6)]-beta-D-GlcNAc}-L-asparaginyl-[protein] + GDP + H(+). It participates in protein modification; protein glycosylation. In terms of biological role, catalyzes the addition of fucose in alpha 1-6 linkage to the first GlcNAc residue, next to the peptide chains in N-glycans. The chain is Alpha-(1,6)-fucosyltransferase (fut8) from Xenopus tropicalis (Western clawed frog).